The sequence spans 815 residues: Vacuolar proton translocating ATPase 100 kDa subunit (815 aa).

Residues 1–402 are Cytoplasmic-facing; it reads MSFLRPSIWR…NAYGIAHYRE (402 aa). Residues 403-421 form a helical membrane-spanning segment; sequence VNPAVLTIVTFPFLFGVMF. Residues 422-423 are Vacuolar-facing; that stretch reads GD. A helical transmembrane segment spans residues 424 to 440; sequence VGHGALLLLSALGLISL. Over 441–454 the chain is Cytoplasmic; it reads EKKLAGKKLNELIQ. A helical transmembrane segment spans residues 455–484; sequence MPFDGRYVLFLMSLFSIYVGFIYNECFSIP. The Vacuolar portion of the chain corresponds to 485-530; the sequence is MNIFGSQYNLNSTTGLYTYQHTDRVYPVGVDPLWKGAPNELVYYNS. A helical membrane pass occupies residues 531–550; sequence FKMKLSIIFGVVQMSVGICF. Residues 551–571 are Cytoplasmic-facing; sequence SLLNYLNQKGPIKIVNILTQF. Residues 572-592 traverse the membrane as a helical segment; it reads VPQMIFLWSIFGYMSVLIILK. Residues 593-639 are Vacuolar-facing; sequence WVVPYRSFEVDKVDPPFILPTIIAMFLSPGGTPDVVFFSGQGAVQTA. The helical transmembrane segment at 640–659 threads the bilayer; that stretch reads LLFLALISIPVMLVIKPLFM. Residues 660–706 are Cytoplasmic-facing; the sequence is KRFHFQEVERKKLGHHEEEHDDEALYTGHHGEEFEMGEVFVHQVIHT. The chain crosses the membrane as a helical span at residues 707-731; that stretch reads IEFVLGAVSNTASYLRLWALSLAHS. The Vacuolar segment spans residues 732 to 749; it reads ELSSVFWERILIGQVERG. Residues 750 to 788 form a helical membrane-spanning segment; the sequence is NPFLAFVGFGAWLGASVAVLLLMESLSAFLHALRLHWVE. Topologically, residues 789–815 are cytoplasmic; that stretch reads FQNKFYIGDGVRFIPYSATRILSEDDE.

It belongs to the V-ATPase 116 kDa subunit family. In terms of assembly, the V-ATPase is a heteromultimeric enzyme.

Its subcellular location is the cytoplasmic vesicle membrane. The protein resides in the endosome membrane. It localises to the vacuole membrane. It is found in the lysosome membrane. In terms of biological role, essential component of the vacuolar proton pump (V-ATPase), a multimeric enzyme that catalyzes the translocation of protons across the membranes. Required for assembly and activity of the V-ATPase. Required in both the contractile vacuole system and the endosomal/lysosomal system. Also required for cytosolic pH regulation. The sequence is that of Vacuolar proton translocating ATPase 100 kDa subunit (vatM) from Dictyostelium discoideum (Social amoeba).